A 709-amino-acid chain; its full sequence is Polyribonucleotide nucleotidyltransferase (709 aa).

The Mg(2+) site is built by D489 and D495. The 60-residue stretch at 556 to 615 folds into the KH domain; the sequence is PKIDMIKIDVDKIKVVIGKGGETIDKIIAETGVKIDIDEEGNVSIFSSDQAAIDRTKDII. Residues 625–693 enclose the S1 motif domain; that stretch reads GEVYHAKVVR…DKGRVDASMK (69 aa).

The protein belongs to the polyribonucleotide nucleotidyltransferase family. Mg(2+) serves as cofactor.

It is found in the cytoplasm. The enzyme catalyses RNA(n+1) + phosphate = RNA(n) + a ribonucleoside 5'-diphosphate. In terms of biological role, involved in mRNA degradation. Catalyzes the phosphorolysis of single-stranded polyribonucleotides processively in the 3'- to 5'-direction. This Streptococcus agalactiae serotype V (strain ATCC BAA-611 / 2603 V/R) protein is Polyribonucleotide nucleotidyltransferase.